Reading from the N-terminus, the 201-residue chain is MEWVWALVLLAALGSAQAERDCRVSSFRVKENFDKARFSGTWYAMAKKDPEGLFLQDNIVAEFSVDENGHMSATAKGRVRLLNNWDVCADMVGTFTDTEDPAKFKMKYWGVASFLQKGNDDHWIIDTDYDTYAVQYSCRLQNLDGTCADSYSFVFARDPHGFSPEVQKIVRQRQEELCLARQYRIITHNGYCDGKSERNIL.

The first 18 residues, 1 to 18 (MEWVWALVLLAALGSAQA), serve as a signal peptide directing secretion. Intrachain disulfides connect C22–C178, C88–C192, and C138–C147. Q116 serves as a coordination point for substrate. R139 carries the omega-N-methylarginine modification.

The protein belongs to the calycin superfamily. Lipocalin family. In terms of assembly, interacts with TTR. Interaction with TTR prevents its loss by filtration through the kidney glomeruli. Interacts with STRA6.

The protein resides in the secreted. Its function is as follows. Retinol-binding protein that mediates retinol transport in blood plasma. Delivers retinol from the liver stores to the peripheral tissues. Transfers the bound all-trans retinol to STRA6, that then facilitates retinol transport across the cell membrane. This chain is Retinol-binding protein 4 (RBP4), found in Sus scrofa (Pig).